The following is a 396-amino-acid chain: 1-deoxy-D-xylulose 5-phosphate reductoisomerase (396 aa).

Positions 10, 11, 12, 13, and 123 each coordinate NADPH. Lys124 lines the 1-deoxy-D-xylulose 5-phosphate pocket. Glu125 serves as a coordination point for NADPH. Asp149 contacts Mn(2+). Ser150, Glu151, Ser185, and His208 together coordinate 1-deoxy-D-xylulose 5-phosphate. Glu151 is a Mn(2+) binding site. Residue Gly214 coordinates NADPH. 4 residues coordinate 1-deoxy-D-xylulose 5-phosphate: Ser221, Asn226, Lys227, and Glu230. Position 230 (Glu230) interacts with Mn(2+).

It belongs to the DXR family. It depends on Mg(2+) as a cofactor. The cofactor is Mn(2+).

The enzyme catalyses 2-C-methyl-D-erythritol 4-phosphate + NADP(+) = 1-deoxy-D-xylulose 5-phosphate + NADPH + H(+). It functions in the pathway isoprenoid biosynthesis; isopentenyl diphosphate biosynthesis via DXP pathway; isopentenyl diphosphate from 1-deoxy-D-xylulose 5-phosphate: step 1/6. Its function is as follows. Catalyzes the NADPH-dependent rearrangement and reduction of 1-deoxy-D-xylulose-5-phosphate (DXP) to 2-C-methyl-D-erythritol 4-phosphate (MEP). This chain is 1-deoxy-D-xylulose 5-phosphate reductoisomerase, found in Shewanella baltica (strain OS223).